The primary structure comprises 585 residues: Arginine--tRNA ligase (585 aa).

The short motif at 131–141 is the 'HIGH' region element; it reads ANPTGPMHVGH.

Belongs to the class-I aminoacyl-tRNA synthetase family. As to quaternary structure, monomer.

The protein resides in the cytoplasm. The enzyme catalyses tRNA(Arg) + L-arginine + ATP = L-arginyl-tRNA(Arg) + AMP + diphosphate. The protein is Arginine--tRNA ligase of Brucella anthropi (strain ATCC 49188 / DSM 6882 / CCUG 24695 / JCM 21032 / LMG 3331 / NBRC 15819 / NCTC 12168 / Alc 37) (Ochrobactrum anthropi).